The sequence spans 145 residues: Copper transporter 4 (145 aa).

Helical transmembrane passes span 53 to 73 and 106 to 126; these read GMYA…EWLA and YLVI…AIFG.

The protein belongs to the copper transporter (Ctr) (TC 1.A.56) family. SLC31A subfamily. In terms of tissue distribution, highly expressed in roots and at lower levels in leaves, stems and flowers.

Its subcellular location is the membrane. Involved in the transport of copper. The chain is Copper transporter 4 (COPT4) from Arabidopsis thaliana (Mouse-ear cress).